The primary structure comprises 207 residues: Superoxide dismutase [Mn] (207 aa).

Mn(2+) is bound by residues His-28, His-76, Asp-160, and His-164.

Belongs to the iron/manganese superoxide dismutase family. Mn(2+) serves as cofactor.

The enzyme catalyses 2 superoxide + 2 H(+) = H2O2 + O2. Functionally, destroys superoxide anion radicals which are normally produced within the cells and which are toxic to biological systems. This is Superoxide dismutase [Mn] (sodA) from Mycobacterium avium.